The sequence spans 72 residues: Omega-conotoxin-like SVIA mutant 1 (72 aa).

A signal peptide spans 1–22 (MKLTCVVIVAVLLLTACQLITA). Residues 23 to 48 (EDSRGAQKHRTLRSTARRSKSELTTR) constitute a propeptide that is removed on maturation. 3 disulfide bridges follow: Cys49-Cys63, Cys56-Cys66, and Cys62-Cys71. A 4-hydroxyproline modification is found at Pro55.

It belongs to the conotoxin O1 superfamily. In terms of tissue distribution, expressed by the venom duct.

It localises to the secreted. Functionally, omega-conotoxins act at presynaptic membranes, they bind and block voltage-gated calcium channels (Cav). The polypeptide is Omega-conotoxin-like SVIA mutant 1 (Conus striatus (Striated cone)).